We begin with the raw amino-acid sequence, 561 residues long: Arginine--tRNA ligase (561 aa).

Positions 129 to 139 match the 'HIGH' region motif; that stretch reads ANPTGPLHIGH.

Belongs to the class-I aminoacyl-tRNA synthetase family. Monomer.

Its subcellular location is the cytoplasm. The catalysed reaction is tRNA(Arg) + L-arginine + ATP = L-arginyl-tRNA(Arg) + AMP + diphosphate. In Geotalea daltonii (strain DSM 22248 / JCM 15807 / FRC-32) (Geobacter daltonii), this protein is Arginine--tRNA ligase.